We begin with the raw amino-acid sequence, 177 residues long: Large ribosomal subunit protein uL6 (177 aa).

This sequence belongs to the universal ribosomal protein uL6 family. In terms of assembly, part of the 50S ribosomal subunit.

In terms of biological role, this protein binds to the 23S rRNA, and is important in its secondary structure. It is located near the subunit interface in the base of the L7/L12 stalk, and near the tRNA binding site of the peptidyltransferase center. The polypeptide is Large ribosomal subunit protein uL6 (Beijerinckia indica subsp. indica (strain ATCC 9039 / DSM 1715 / NCIMB 8712)).